The chain runs to 458 residues: tRNA modification GTPase MnmE (458 aa).

Residues arginine 26, glutamate 88, and arginine 127 each coordinate (6S)-5-formyl-5,6,7,8-tetrahydrofolate. Positions 224–378 (GLSTAIIGRP…IEDRINQLFF (155 aa)) constitute a TrmE-type G domain. Asparagine 234 is a K(+) binding site. Residues 234 to 239 (NVGKSS), 253 to 259 (TDIAGTT), and 278 to 281 (DTAG) each bind GTP. Serine 238 provides a ligand contact to Mg(2+). Threonine 253, isoleucine 255, and threonine 258 together coordinate K(+). A Mg(2+)-binding site is contributed by threonine 259. Lysine 458 contacts (6S)-5-formyl-5,6,7,8-tetrahydrofolate.

This sequence belongs to the TRAFAC class TrmE-Era-EngA-EngB-Septin-like GTPase superfamily. TrmE GTPase family. Homodimer. Heterotetramer of two MnmE and two MnmG subunits. K(+) is required as a cofactor.

The protein resides in the cytoplasm. Functionally, exhibits a very high intrinsic GTPase hydrolysis rate. Involved in the addition of a carboxymethylaminomethyl (cmnm) group at the wobble position (U34) of certain tRNAs, forming tRNA-cmnm(5)s(2)U34. This chain is tRNA modification GTPase MnmE, found in Streptococcus pyogenes serotype M3 (strain ATCC BAA-595 / MGAS315).